The chain runs to 408 residues: Glutamate N-acetyltransferase (408 aa).

Residues Thr-150, Lys-176, Thr-189, Glu-271, Asn-403, and Thr-408 each coordinate substrate. Thr-189 (nucleophile) is an active-site residue.

The protein belongs to the ArgJ family. As to quaternary structure, heterotetramer of two alpha and two beta chains.

The protein resides in the cytoplasm. It catalyses the reaction N(2)-acetyl-L-ornithine + L-glutamate = N-acetyl-L-glutamate + L-ornithine. It participates in amino-acid biosynthesis; L-arginine biosynthesis; L-ornithine and N-acetyl-L-glutamate from L-glutamate and N(2)-acetyl-L-ornithine (cyclic): step 1/1. Functionally, catalyzes the transfer of the acetyl group from N(2)-acetylornithine to glutamate, forming N-acetylglutamate and L-ornithine. This Methanococcus maripaludis (strain C5 / ATCC BAA-1333) protein is Glutamate N-acetyltransferase.